A 231-amino-acid chain; its full sequence is Endonuclease NucS (231 aa).

It belongs to the NucS endonuclease family.

Its subcellular location is the cytoplasm. Cleaves both 3' and 5' ssDNA extremities of branched DNA structures. The polypeptide is Endonuclease NucS (Arthrobacter sp. (strain FB24)).